The following is a 563-amino-acid chain: Group II intron-interrupted relaxase LtrB (563 aa).

Y44 is an active-site residue. Residues H159 and H161 each contribute to the Mg(2+) site.

This sequence belongs to the mobilization (MOB) protein type 1 family. Mg(2+) is required as a cofactor. Mn(2+) serves as cofactor.

Its function is as follows. Mediates initiation of conjugal transfer possibly by introducing a single-stranded nick at the potential origin of transfer. In Lactococcus lactis subsp. cremoris (strain MG1363), this protein is Group II intron-interrupted relaxase LtrB (ltrBE1).